The chain runs to 619 residues: MALLQIAEPGQSPKPHERRLAVGIDLGTTNSLVAAVRSGVAEPLPDAQGRLILPSAVRYHAERAEVGESARAAAAKDPFNTIISVKRLMGRGLEDVKQLGEQLPYRFRQGESHMPFIETVQGLKSPVEVSADILRELRQRAETTLGGELVGAVITVPAYFDDAQRQATKDAARLAGLNVLRLLNEPTAAAVAYGLDKGAEGLVAIYDLGGGTFDISILRLTRGVFEVLATGGDTALGGDDFDHAIAGWVIEQAGLSADLDPGSQRQLLQIACAAKERLTDEASVRVAYGDWSGELSRATLDELIEPFVARSLKSCRRAVRDSGVDLEEIRSVVMVGGSTRVPRVRTAVGELFGCEPLTDIDPDQVVAIGAAIQADALAGNKRGEELLLLDVIPLSLGLETMGGLMEKVIPRNTTIPVARAQEFTTYKDGQTAMMIHVLQGERELVKDCRSLARFELRGIPPMVAGAAKIRVTFQVDADGLLGVSARELSSGVEASIQVKPSYGLTDGEIARMLKDSFDYAGDDKAARALREQQVEAQRLLEAVQSALDVDGERLLDEEERLAIAAQMDTLRELAGGSDTAAIENQIKRLSQVTDAFAARRMDATVKAALSGRRLNEIEE.

It belongs to the heat shock protein 70 family.

Chaperone involved in the maturation of iron-sulfur cluster-containing proteins. Has a low intrinsic ATPase activity which is markedly stimulated by HscB. This is Chaperone protein HscA homolog from Pseudomonas aeruginosa (strain UCBPP-PA14).